The sequence spans 446 residues: Chromosomal replication initiator protein DnaA (446 aa).

Residues methionine 1 to glutamate 72 form a domain I, interacts with DnaA modulators region. The domain II stretch occupies residues glutamate 72–asparagine 109. Residues methionine 110 to serine 326 are domain III, AAA+ region. ATP contacts are provided by glycine 154, glycine 156, lysine 157, and threonine 158. The tract at residues serine 327–lysine 446 is domain IV, binds dsDNA.

Belongs to the DnaA family. In terms of assembly, oligomerizes as a right-handed, spiral filament on DNA at oriC.

The protein resides in the cytoplasm. Its function is as follows. Plays an essential role in the initiation and regulation of chromosomal replication. ATP-DnaA binds to the origin of replication (oriC) to initiate formation of the DNA replication initiation complex once per cell cycle. Binds the DnaA box (a 9 base pair repeat at the origin) and separates the double-stranded (ds)DNA. Forms a right-handed helical filament on oriC DNA; dsDNA binds to the exterior of the filament while single-stranded (ss)DNA is stabiized in the filament's interior. The ATP-DnaA-oriC complex binds and stabilizes one strand of the AT-rich DNA unwinding element (DUE), permitting loading of DNA polymerase. After initiation quickly degrades to an ADP-DnaA complex that is not apt for DNA replication. Binds acidic phospholipids. The chain is Chromosomal replication initiator protein DnaA from Bacillus pumilus (strain SAFR-032).